A 21-amino-acid chain; its full sequence is Venom peptide Ocy4 (21 aa).

As to expression, expressed by the venom gland.

The protein resides in the secreted. In Opisthacanthus cayaporum (South American scorpion), this protein is Venom peptide Ocy4.